The chain runs to 72 residues: MAKEETIQMQGEILETLPNATFRVKLENGHIVLGHISGKMRMHYIRILPGDKVTVDLTPYDLSRARITFRAK.

One can recognise an S1-like domain in the interval 1-72 (MAKEETIQMQ…SRARITFRAK (72 aa)).

It belongs to the IF-1 family. In terms of assembly, component of the 30S ribosomal translation pre-initiation complex which assembles on the 30S ribosome in the order IF-2 and IF-3, IF-1 and N-formylmethionyl-tRNA(fMet); mRNA recruitment can occur at any time during PIC assembly.

It localises to the cytoplasm. Its function is as follows. One of the essential components for the initiation of protein synthesis. Stabilizes the binding of IF-2 and IF-3 on the 30S subunit to which N-formylmethionyl-tRNA(fMet) subsequently binds. Helps modulate mRNA selection, yielding the 30S pre-initiation complex (PIC). Upon addition of the 50S ribosomal subunit IF-1, IF-2 and IF-3 are released leaving the mature 70S translation initiation complex. The chain is Translation initiation factor IF-1 from Nitrosospira multiformis (strain ATCC 25196 / NCIMB 11849 / C 71).